Reading from the N-terminus, the 252-residue chain is uncharacterized protein (252 aa).

Residue L16–I40 participates in NADP(+) binding. S152 lines the substrate pocket. The Proton acceptor role is filled by Y165.

It belongs to the short-chain dehydrogenases/reductases (SDR) family.

This is an uncharacterized protein from Escherichia coli (strain K12).